Reading from the N-terminus, the 463-residue chain is Quinolone resistance protein NorB (463 aa).

Helical transmembrane passes span 17 to 37 (IGIV…VNVV), 53 to 73 (IAVS…GGLA), 86 to 106 (IILN…LLLI), 107 to 127 (IGRL…LSII), 142 to 162 (YWSI…GAVA), 165 to 185 (LGWR…LFLI), 201 to 221 (FDIK…ILIT), 230 to 250 (SLLF…FIVL), 273 to 293 (TASN…NTFV), 299 to 319 (YSSL…LIMI), 334 to 354 (PMLI…LTFL), 357 to 377 (ILYV…LGIY), 403 to 423 (MASA…YAIV), and 435 to 455 (IALW…LLLV).

The protein belongs to the major facilitator superfamily. TCR/Tet family.

It is found in the cell membrane. Multidrug efflux pump that acts independently of NorA and is one of the factors that confers resistance against diverse quinolones and chemical compounds. Can facilitate bacterial survival in vivo when overexpressed in an abscess and may contribute to the relative resistance of staphylococcal abscesses to antimicrobial therapy. This chain is Quinolone resistance protein NorB (norB), found in Staphylococcus aureus (strain MW2).